We begin with the raw amino-acid sequence, 175 residues long: Translation initiation factor IF-3 (175 aa).

It belongs to the IF-3 family. As to quaternary structure, monomer.

The protein localises to the cytoplasm. IF-3 binds to the 30S ribosomal subunit and shifts the equilibrium between 70S ribosomes and their 50S and 30S subunits in favor of the free subunits, thus enhancing the availability of 30S subunits on which protein synthesis initiation begins. The protein is Translation initiation factor IF-3 of Aquifex aeolicus (strain VF5).